The primary structure comprises 316 residues: tRNA-cytidine(32) 2-sulfurtransferase (316 aa).

The PP-loop motif motif lies at 58 to 63 (SGGKDS). Residues Cys133, Cys136, and Cys224 each contribute to the [4Fe-4S] cluster site.

Belongs to the TtcA family. In terms of assembly, homodimer. It depends on Mg(2+) as a cofactor. Requires [4Fe-4S] cluster as cofactor.

The protein resides in the cytoplasm. The enzyme catalyses cytidine(32) in tRNA + S-sulfanyl-L-cysteinyl-[cysteine desulfurase] + AH2 + ATP = 2-thiocytidine(32) in tRNA + L-cysteinyl-[cysteine desulfurase] + A + AMP + diphosphate + H(+). It participates in tRNA modification. In terms of biological role, catalyzes the ATP-dependent 2-thiolation of cytidine in position 32 of tRNA, to form 2-thiocytidine (s(2)C32). The sulfur atoms are provided by the cysteine/cysteine desulfurase (IscS) system. This is tRNA-cytidine(32) 2-sulfurtransferase from Aromatoleum aromaticum (strain DSM 19018 / LMG 30748 / EbN1) (Azoarcus sp. (strain EbN1)).